We begin with the raw amino-acid sequence, 452 residues long: Probable intron-encoded endonuclease 2 (452 aa).

Transmembrane regions (helical) follow at residues 1 to 21 (MNITLILFLIGILGFVLNRKN), 22 to 42 (IILMLISIEIMLLAITFLILV), and 57 to 77 (IYIIVVAGAESAIGLAILVAF). Positions 1-80 (MNITLILFLI…LAILVAFYRL (80 aa)) are ndh-4L exon 1 encoded. The ndh-4L intron 1 encoded stretch occupies residues 81 to 452 (INSPVKNPRS…SLEGGMNKNI (372 aa)).

It in the N-terminal section; belongs to the complex I subunit 4L family. The protein in the C-terminal section; belongs to the LAGLIDADG endonuclease family.

The protein localises to the mitochondrion membrane. Its function is as follows. Mitochondrial DNA endonuclease involved in intron homing. This is Probable intron-encoded endonuclease 2 from Neurospora crassa (strain ATCC 24698 / 74-OR23-1A / CBS 708.71 / DSM 1257 / FGSC 987).